The following is a 437-amino-acid chain: Chromosomal replication initiator protein DnaA (437 aa).

The tract at residues 1–74 (MNLAWNKILE…EACGDKIPVE (74 aa)) is domain I, interacts with DnaA modulators. Residues 74-98 (EILIETKATSPLQSFLEKSFDQKDF) are domain II. A domain III, AAA+ region region spans residues 99 to 315 (QFNPDYTFET…GALNDIYLYK (217 aa)). Residues Gly142, Gly144, Lys145, and Thr146 each contribute to the ATP site. Positions 316 to 437 (KSYSLLFLNL…ERISSKYKLQ (122 aa)) are domain IV, binds dsDNA.

This sequence belongs to the DnaA family. As to quaternary structure, oligomerizes as a right-handed, spiral filament on DNA at oriC.

The protein resides in the cytoplasm. Its function is as follows. Plays an essential role in the initiation and regulation of chromosomal replication. ATP-DnaA binds to the origin of replication (oriC) to initiate formation of the DNA replication initiation complex once per cell cycle. Binds the DnaA box (a 9 base pair repeat at the origin) and separates the double-stranded (ds)DNA. Forms a right-handed helical filament on oriC DNA; dsDNA binds to the exterior of the filament while single-stranded (ss)DNA is stabiized in the filament's interior. The ATP-DnaA-oriC complex binds and stabilizes one strand of the AT-rich DNA unwinding element (DUE), permitting loading of DNA polymerase. After initiation quickly degrades to an ADP-DnaA complex that is not apt for DNA replication. Binds acidic phospholipids. The protein is Chromosomal replication initiator protein DnaA of Leptospira borgpetersenii serovar Hardjo-bovis (strain JB197).